The primary structure comprises 32 residues: Dermatoxin-J1 (32 aa).

Position 32 is a glutamine amide (Q32).

As to expression, expressed by the skin glands.

Its subcellular location is the secreted. Its function is as follows. Antimicrobial peptide. The protein is Dermatoxin-J1 of Phasmahyla jandaia (Jandaia leaf frog).